Reading from the N-terminus, the 192-residue chain is Peptidyl-tRNA hydrolase (192 aa).

Tyrosine 17 is a tRNA binding site. Histidine 22 serves as the catalytic Proton acceptor. TRNA is bound by residues tyrosine 68, asparagine 70, and asparagine 116.

The protein belongs to the PTH family. Monomer.

The protein localises to the cytoplasm. It catalyses the reaction an N-acyl-L-alpha-aminoacyl-tRNA + H2O = an N-acyl-L-amino acid + a tRNA + H(+). In terms of biological role, hydrolyzes ribosome-free peptidyl-tRNAs (with 1 or more amino acids incorporated), which drop off the ribosome during protein synthesis, or as a result of ribosome stalling. Catalyzes the release of premature peptidyl moieties from peptidyl-tRNA molecules trapped in stalled 50S ribosomal subunits, and thus maintains levels of free tRNAs and 50S ribosomes. The polypeptide is Peptidyl-tRNA hydrolase (Mycolicibacterium vanbaalenii (strain DSM 7251 / JCM 13017 / BCRC 16820 / KCTC 9966 / NRRL B-24157 / PYR-1) (Mycobacterium vanbaalenii)).